Consider the following 398-residue polypeptide: MQKRLTLLGSTGSIGDSTLDVVARHPERFAVHALTAHRNGEKLVAQCLRFAPDVAVVGDAETAARVEAQLRAAGSRTQVAYGKQALVDVSKSDGCDTVVAAIVGAAGLAPSLAAARAGKRILLANKEALVMSGAIFMDAVRDHGAILLPVDSEHNAIFQCMPRDAAEHGGIAKIIVTASGGPFRTREPATLASVTPDEACKHPNWVMGRKISVDSATMMNKGLEVIEAHWLFGLPSEHIDVLIHPQSVIHSLVSYRDGSVLAQLGNPDMRTPIAHALAFPERVDAGVAQLDLAQIATLTFEKPDYARFPCLALAIDALEAGGVASAALNAANEIAVDAFLSRRIRFTAIAQTVGAVLDGLSNRTPGGLDDVIEADAAARRAATAFIGKLPAPGVERAA.

NADPH contacts are provided by T11, G12, S13, I14, R38, N39, and N125. K126 provides a ligand contact to 1-deoxy-D-xylulose 5-phosphate. E127 provides a ligand contact to NADPH. D151 is a binding site for Mn(2+). 1-deoxy-D-xylulose 5-phosphate contacts are provided by S152, E153, S179, and H202. E153 serves as a coordination point for Mn(2+). G208 is an NADPH binding site. 4 residues coordinate 1-deoxy-D-xylulose 5-phosphate: S215, N220, K221, and E224. E224 serves as a coordination point for Mn(2+).

Belongs to the DXR family. Mg(2+) serves as cofactor. Requires Mn(2+) as cofactor.

The catalysed reaction is 2-C-methyl-D-erythritol 4-phosphate + NADP(+) = 1-deoxy-D-xylulose 5-phosphate + NADPH + H(+). It functions in the pathway isoprenoid biosynthesis; isopentenyl diphosphate biosynthesis via DXP pathway; isopentenyl diphosphate from 1-deoxy-D-xylulose 5-phosphate: step 1/6. In terms of biological role, catalyzes the NADPH-dependent rearrangement and reduction of 1-deoxy-D-xylulose-5-phosphate (DXP) to 2-C-methyl-D-erythritol 4-phosphate (MEP). The chain is 1-deoxy-D-xylulose 5-phosphate reductoisomerase from Burkholderia mallei (strain NCTC 10247).